The chain runs to 567 residues: Proline--tRNA ligase (567 aa).

Belongs to the class-II aminoacyl-tRNA synthetase family. ProS type 1 subfamily. In terms of assembly, homodimer.

Its subcellular location is the cytoplasm. It carries out the reaction tRNA(Pro) + L-proline + ATP = L-prolyl-tRNA(Pro) + AMP + diphosphate. Its function is as follows. Catalyzes the attachment of proline to tRNA(Pro) in a two-step reaction: proline is first activated by ATP to form Pro-AMP and then transferred to the acceptor end of tRNA(Pro). As ProRS can inadvertently accommodate and process non-cognate amino acids such as alanine and cysteine, to avoid such errors it has two additional distinct editing activities against alanine. One activity is designated as 'pretransfer' editing and involves the tRNA(Pro)-independent hydrolysis of activated Ala-AMP. The other activity is designated 'posttransfer' editing and involves deacylation of mischarged Ala-tRNA(Pro). The misacylated Cys-tRNA(Pro) is not edited by ProRS. In Idiomarina loihiensis (strain ATCC BAA-735 / DSM 15497 / L2-TR), this protein is Proline--tRNA ligase.